A 793-amino-acid chain; its full sequence is MKFKYGAIFFSGFLGLSAILAACGTKGKFDQVDDGKIKLASSLTSKSASKALQAIVKKYNEVKKPGDYPIEITQIAGGYDGGRSDLQTRVNVKDTTNFYNLILNYPDLVSTLGRVGMELPFDNVKVDKLSPRFLDFNNRISAISKPGIYGIPVSLSTEVLSINGPVLHYILNNAKKKEGTLNQKMTSSSEGKNSSGTLTVATDTETSSLWKKIEDSAKANGKSDEKGKGKKKDNKSATFSLVQLKQTQEKTDDSQDTKNSDDQVKKSWGEYQEVDGVLKNFEFKASIFENWHDLLDFSTRVAKSFKKIHENSNKKGNDIQGILGVDSTPNSLFTSVFAAGGGDYNNFFYKIENGRADFSNFKNKGTSYQNLQKVFGDFKGLIDKNGIFVNKGGSYSSNFQKFHQLAYSISSTSGFFYSFAGKSAKRLNFGDSFIEYPRFTQEIKAPSKNGENGQTNEGNSTNGEQNLLGTFEVKDDSKPKEEVKSNKNSGKESSQNQGKKSNNNKTIYLYETKIPDGKTAGDNAILIKDKNVIEKLKSAAKEENKEQTAEATKAAITSNKAKSTKKESSKVIGYTTTDSVREDGKNIFAIDRVNGENYDRKIIVGAKAETLNQSSTLQSEEAIVLPAPGKYLNGDPKKVTITQGPNIIGIHANEKENAETQKFVDWFLNSPQTWEKQSRDKKGSSEKQTAAEFFAESASYILPLKEIFDKNDTKTEKGKNSKTQQRTNTYAEKALELFKQISQNQIVSYSDPSDFRSGKFRDAIGATFNAAVSSKADFNKFVQNFTATLGSDI.

A signal peptide spans 1 to 22 (MKFKYGAIFFSGFLGLSAILAA). The N-palmitoyl cysteine moiety is linked to residue C23. C23 carries S-diacylglycerol cysteine lipidation. Disordered regions lie at residues 181–200 (LNQKMTSSSEGKNSSGTLTV), 212–264 (KIED…DDQV), and 444–504 (KAPS…SNNN). The span at 212 to 227 (KIEDSAKANGKSDEKG) shows a compositional bias: basic and acidic residues. The segment covering 237 to 246 (ATFSLVQLKQ) has biased composition (polar residues). The segment covering 247–264 (TQEKTDDSQDTKNSDDQV) has biased composition (basic and acidic residues). A compositionally biased stretch (polar residues) spans 449-468 (NGENGQTNEGNSTNGEQNLL). Residues 472–485 (EVKDDSKPKEEVKS) show a composition bias toward basic and acidic residues. Over residues 491–504 (KESSQNQGKKSNNN) the composition is skewed to low complexity.

It belongs to the MG185/MG260 family.

The protein localises to the cell membrane. This is an uncharacterized protein from Mycoplasma pneumoniae (strain ATCC 29342 / M129 / Subtype 1) (Mycoplasmoides pneumoniae).